We begin with the raw amino-acid sequence, 617 residues long: 1-deoxy-D-xylulose-5-phosphate synthase (617 aa).

Thiamine diphosphate contacts are provided by residues His-76 and 117 to 119 (GHS). Asp-148 serves as a coordination point for Mg(2+). Thiamine diphosphate is bound by residues 149–150 (GA), Asn-177, Tyr-285, and Glu-366. Asn-177 contributes to the Mg(2+) binding site.

This sequence belongs to the transketolase family. DXPS subfamily. In terms of assembly, homodimer. It depends on Mg(2+) as a cofactor. Requires thiamine diphosphate as cofactor.

It catalyses the reaction D-glyceraldehyde 3-phosphate + pyruvate + H(+) = 1-deoxy-D-xylulose 5-phosphate + CO2. It functions in the pathway metabolic intermediate biosynthesis; 1-deoxy-D-xylulose 5-phosphate biosynthesis; 1-deoxy-D-xylulose 5-phosphate from D-glyceraldehyde 3-phosphate and pyruvate: step 1/1. Catalyzes the acyloin condensation reaction between C atoms 2 and 3 of pyruvate and glyceraldehyde 3-phosphate to yield 1-deoxy-D-xylulose-5-phosphate (DXP). The chain is 1-deoxy-D-xylulose-5-phosphate synthase from Histophilus somni (strain 2336) (Haemophilus somnus).